The primary structure comprises 510 residues: Zinc metalloproteinase (510 aa).

Residues 1-24 form the signal peptide; that stretch reads MKSKLICIIMVIAFQAHFTMTVKA. The propeptide occupies 25 to 200; it reads DSVGEEKLQN…ILKKQNMLSE (176 aa). Histidine 349 serves as a coordination point for Zn(2+). Residue glutamate 350 is part of the active site. Residues histidine 353 and glutamate 373 each coordinate Zn(2+). The active-site Proton donor is the histidine 437.

It belongs to the peptidase M4 family. The cofactor is Zn(2+).

The protein resides in the secreted. In terms of biological role, probably linked to the pathogenesis of listerial infection. This Listeria monocytogenes serovar 1/2a (strain ATCC BAA-679 / EGD-e) protein is Zinc metalloproteinase (mpl).